A 285-amino-acid polypeptide reads, in one-letter code: UPF0354 protein SH1179 (285 aa).

Belongs to the UPF0354 family.

The protein is UPF0354 protein SH1179 of Staphylococcus haemolyticus (strain JCSC1435).